We begin with the raw amino-acid sequence, 883 residues long: MNEQYSAMRSNVSMLGKLLGDTIKDALGENILDRVETIRKLSKSSRAGNDAHRQELLSTLQNLSNDELLPVARAFSQFLNLTNVAEQYHTISPNGEGAKNPELLLQTFQRLKQQPNLTEAAVCEALGSLSLELVLTAHPTEITRRTLIHKLVEVNSCLKQLDHNDLSDYEHAQIMRRLRQLVAQAWHTDEIRKYRPSPVDEAKWGFAVVENSLWEGVPQFLRELNEQVEAAFGYTLPVDFVPVQFTSWMGGDRDGNPNVTADITRHVLQLSRWKATDLFLRDIAVLISELSMSECTPEVRELCGNPEALEPYREIMKNLRSQLMSTQAYLAGRLKGERLTRPANLLIANEQLWEPLYTCYQSLQACGMGIIANGQLLDTLRRVKCFGVPLVRIDIRQESTRHTEAIAEITRYLGLGDYESWSEADKQAFLIRELNSKRPLTPRQWEPSADTKEVLDTCRVAAEAPKGSIAAYVISMAKTPSDVLAVHLLLKEAGIDYAMPVAPLFETLDDLNNANGVMSQLLNIDWYRGLIQGKQMVMIGYSDSAKDAGVMAASWAQYQAQDALIKTCEKAGITLTLFHGRGGSIGRGGAPAHAALLSQPPGSLKGGLRVTEQGEMIRFKYGLPEVTISSLSLYTGAILEANLLPPPEPKTEWIGIMERLSAVSCKMYRGYVREHAEFVPYFRSATPEQELAKLPLGSRPAKRRPTGGVESLRAIPWIFAWTQNRLMLPAWLGAGAALQQVMEDGHQDQLEAMCRDWPFFSTRLGMLEMVFSKADLWLAEYYDQRLVDKSLWPLGKQLRDQLESDIKAVLTIANDAHLMADQPWIAESIALRNVYTDPLNVLQAELLHRSRQQEKAGGEPDARVEQALMVTIAGVAAGMRNTG.

Active-site residues include His-138 and Lys-546.

The protein belongs to the PEPCase type 1 family. Mg(2+) is required as a cofactor.

The enzyme catalyses oxaloacetate + phosphate = phosphoenolpyruvate + hydrogencarbonate. Forms oxaloacetate, a four-carbon dicarboxylic acid source for the tricarboxylic acid cycle. The protein is Phosphoenolpyruvate carboxylase of Erwinia tasmaniensis (strain DSM 17950 / CFBP 7177 / CIP 109463 / NCPPB 4357 / Et1/99).